The following is a 224-amino-acid chain: UPF0758 protein PSPPH_0210 (224 aa).

Positions 102-224 (ALENPTQVRN…PLSMVERGLM (123 aa)) constitute an MPN domain. The Zn(2+) site is built by H173, H175, and D186. Positions 173–186 (HNHPSGITTPSRSD) match the JAMM motif motif.

Belongs to the UPF0758 family.

This Pseudomonas savastanoi pv. phaseolicola (strain 1448A / Race 6) (Pseudomonas syringae pv. phaseolicola (strain 1448A / Race 6)) protein is UPF0758 protein PSPPH_0210.